A 282-amino-acid polypeptide reads, in one-letter code: Nucleotide-binding protein XCC2806 (282 aa).

5–12 contacts ATP; the sequence is GLSGSGKS. A GTP-binding site is contributed by 57 to 60; sequence DVRS.

This sequence belongs to the RapZ-like family.

Its function is as follows. Displays ATPase and GTPase activities. The protein is Nucleotide-binding protein XCC2806 of Xanthomonas campestris pv. campestris (strain ATCC 33913 / DSM 3586 / NCPPB 528 / LMG 568 / P 25).